The following is an 840-amino-acid chain: Heat shock 70 kDa protein 4 (840 aa).

N6-acetyllysine is present on Lys53. Phosphoserine is present on Ser76. Phosphotyrosine occurs at positions 89 and 336. Ser393 and Ser415 each carry phosphoserine. Position 430 is an N6-acetyllysine (Lys430). The tract at residues 500–575 (VHKSEENEEP…QAKKAKVKTS (76 aa)) is disordered. Positions 514 to 533 (QNAKEEEKMQVDQEEPHVEE) are enriched in basic and acidic residues. Thr538 is subject to Phosphothreonine. Phosphoserine occurs at positions 546 and 647. Tyr660 is subject to Phosphotyrosine. Position 679 is an N6-acetyllysine (Lys679). At Ser756 the chain carries Phosphoserine. Lys773 carries the post-translational modification N6-methyllysine. The disordered stretch occupies residues 783 to 840 (ISKPKPKVEPPKEEQKNAEQNGPVDGQGDNPGPQAAEQGTDAAVPSDSDKKLPEMDID). 2 stretches are compositionally biased toward basic and acidic residues: residues 788-799 (PKVEPPKEEQKN) and 829-840 (DSDKKLPEMDID).

This sequence belongs to the heat shock protein 70 family. In terms of assembly, interacts with TJP1/ZO-1.

The protein resides in the cytoplasm. This is Heat shock 70 kDa protein 4 (HSPA4) from Pongo abelii (Sumatran orangutan).